A 101-amino-acid polypeptide reads, in one-letter code: Large ribosomal subunit protein uL23 (101 aa).

The protein belongs to the universal ribosomal protein uL23 family. As to quaternary structure, part of the 50S ribosomal subunit. Contacts protein L29, and trigger factor when it is bound to the ribosome.

Its function is as follows. One of the early assembly proteins it binds 23S rRNA. One of the proteins that surrounds the polypeptide exit tunnel on the outside of the ribosome. Forms the main docking site for trigger factor binding to the ribosome. In Corynebacterium jeikeium (strain K411), this protein is Large ribosomal subunit protein uL23.